A 227-amino-acid polypeptide reads, in one-letter code: Potassium/proton antiporter CemA (227 aa).

4 helical membrane passes run 5–25 (SISL…SFTF), 112–132 (IICF…LILI), 143–163 (LSDT…IGFH), and 187–207 (IISG…KYWI).

Belongs to the CemA family.

It localises to the plastid. The protein resides in the chloroplast inner membrane. It catalyses the reaction K(+)(in) + H(+)(out) = K(+)(out) + H(+)(in). Functionally, contributes to K(+)/H(+) antiport activity by supporting proton efflux to control proton extrusion and homeostasis in chloroplasts in a light-dependent manner to modulate photosynthesis. Prevents excessive induction of non-photochemical quenching (NPQ) under continuous-light conditions. Indirectly promotes efficient inorganic carbon uptake into chloroplasts. The polypeptide is Potassium/proton antiporter CemA (Phaseolus vulgaris (Kidney bean)).